We begin with the raw amino-acid sequence, 85 residues long: Contulakin-Lt2 (85 aa).

An N-terminal signal peptide occupies residues 1 to 22 (MQMAYWVMVMMMVGITAPLSEG). A propeptide spanning residues 23–61 (RKLNDAIRGLVPNDLTPQLLQSLVSRRHRVFHLDNTYLK) is cleaved from the precursor. A disulfide bridge links C65 with C70. The propeptide occupies 76-85 (RRRDLKKRNK).

Belongs to the conotoxin C superfamily. Expressed by the venom duct.

It is found in the secreted. Functionally, acts as an agonist of neurotensin receptors. It binds to human neurotensin type 1 receptor (NTSR1), rat neurotensin types 1 and 2 receptors (NTSR1/NTSR2) and mouse neurotensin type 3 receptor (SORT1). This is Contulakin-Lt2 from Conus litteratus (Lettered cone).